A 444-amino-acid polypeptide reads, in one-letter code: Xaa-Pro dipeptidase (444 aa).

Mn(2+)-binding residues include Asp-247, Asp-258, His-340, Glu-385, and Glu-424.

It belongs to the peptidase M24B family. Bacterial-type prolidase subfamily. The cofactor is Mn(2+).

The catalysed reaction is Xaa-L-Pro dipeptide + H2O = an L-alpha-amino acid + L-proline. Splits dipeptides with a prolyl residue in the C-terminal position. This chain is Xaa-Pro dipeptidase, found in Proteus mirabilis (strain HI4320).